Here is a 331-residue protein sequence, read N- to C-terminus: ABSCISIC ACID-INSENSITIVE 5-like protein 1 (331 aa).

Phosphoserine is present on residues serine 40 and serine 98. Threonine 143 carries the post-translational modification Phosphothreonine. The bZIP domain maps to 247–310; the sequence is MERRQRRMIK…RQEIISRSKQ (64 aa). Residues 249-268 form a basic motif region; the sequence is RRQRRMIKNRESAARSRARR. Residues 275–289 form a leucine-zipper region; it reads LELELNNLTEENTKL. Over residues 296–320 the composition is skewed to basic and acidic residues; that stretch reads NEKKRRQEIISRSKQVTKEKSGDKL. A disordered region spans residues 296–331; the sequence is NEKKRRQEIISRSKQVTKEKSGDKLRKIRRMASAGW.

The protein belongs to the bZIP family. ABI5 subfamily. In terms of assembly, DNA-binding heterodimer with AREB3/DPBF3 or EEL/DPBF4. Interacts with the AFP proteins AFP1, AFP2 and AFP3. Predominantly expressed in seeds.

The protein resides in the nucleus. Functionally, could participate in abscisic acid-regulated gene expression during seed development. The protein is ABSCISIC ACID-INSENSITIVE 5-like protein 1 (DPBF2) of Arabidopsis thaliana (Mouse-ear cress).